The following is a 360-amino-acid chain: tRNA (guanine(37)-N(1))-methyltransferase (360 aa).

Residues R197, 235 to 236 (DL), and N283 contribute to the S-adenosyl-L-methionine site.

This sequence belongs to the class I-like SAM-binding methyltransferase superfamily. TRM5/TYW2 family. As to quaternary structure, monomer.

The protein resides in the mitochondrion matrix. It is found in the nucleus. It localises to the cytoplasm. It catalyses the reaction guanosine(37) in tRNA + S-adenosyl-L-methionine = N(1)-methylguanosine(37) in tRNA + S-adenosyl-L-homocysteine + H(+). In terms of biological role, specifically methylates the N1 position of guanosine-37 in various cytoplasmic and mitochondrial tRNAs. Methylation is not dependent on the nature of the nucleoside 5' of the target nucleoside. This is the first step in the biosynthesis of wybutosine (yW), a modified base adjacent to the anticodon of tRNAs and required for accurate decoding. The protein is tRNA (guanine(37)-N(1))-methyltransferase of Encephalitozoon cuniculi (strain GB-M1) (Microsporidian parasite).